A 351-amino-acid polypeptide reads, in one-letter code: Outer membrane porin protein 32 (351 aa).

An N-terminal signal peptide occupies residues 1 to 19; it reads MKKSLIALAVLAASGAAMA. Gln-20 bears the Pyrrolidone carboxylic acid mark.

It to bacterial outer membrane proteins and porins. In terms of assembly, homotrimer.

It is found in the cell outer membrane. In terms of biological role, forms anion selective channels. The protein is Outer membrane porin protein 32 (omp32) of Delftia acidovorans (Pseudomonas acidovorans).